The sequence spans 161 residues: DNA-directed RNA polymerase 18 kDa subunit (161 aa).

This sequence belongs to the poxviridae DNA-directed RNA polymerase 18 kDa subunit family. As to quaternary structure, the DNA-dependent RNA polymerase used for intermediate and late genes expression consists of eight subunits Rpo30/OPG66, Rpo7/OPG90, Rpo22/OPG103, Rpo147/OPG105, Rpo18/OPG119, Rpo19/OPG131, Rpo132/OPG151 and Rpo35/OPG156. The same holoenzyme, with the addition of the transcription-specificity factor OPG109, is used for early gene expression.

The protein resides in the virion. The enzyme catalyses RNA(n) + a ribonucleoside 5'-triphosphate = RNA(n+1) + diphosphate. Its function is as follows. Part of the DNA-dependent RNA polymerase which catalyzes the transcription of viral DNA into RNA using the four ribonucleoside triphosphates as substrates. Responsible for the transcription of early, intermediate and late genes. DNA-dependent RNA polymerase associates with the early transcription factor (ETF), itself composed of OPG118 and OPG133, thereby allowing the early genes transcription. Late transcription, and probably also intermediate transcription, require newly synthesized RNA polymerase. This Homo sapiens (Human) protein is DNA-directed RNA polymerase 18 kDa subunit (OPG119).